Reading from the N-terminus, the 95-residue chain is Aspartyl/glutamyl-tRNA(Asn/Gln) amidotransferase subunit C (95 aa).

The protein belongs to the GatC family. In terms of assembly, heterotrimer of A, B and C subunits.

The enzyme catalyses L-glutamyl-tRNA(Gln) + L-glutamine + ATP + H2O = L-glutaminyl-tRNA(Gln) + L-glutamate + ADP + phosphate + H(+). It catalyses the reaction L-aspartyl-tRNA(Asn) + L-glutamine + ATP + H2O = L-asparaginyl-tRNA(Asn) + L-glutamate + ADP + phosphate + 2 H(+). Functionally, allows the formation of correctly charged Asn-tRNA(Asn) or Gln-tRNA(Gln) through the transamidation of misacylated Asp-tRNA(Asn) or Glu-tRNA(Gln) in organisms which lack either or both of asparaginyl-tRNA or glutaminyl-tRNA synthetases. The reaction takes place in the presence of glutamine and ATP through an activated phospho-Asp-tRNA(Asn) or phospho-Glu-tRNA(Gln). This is Aspartyl/glutamyl-tRNA(Asn/Gln) amidotransferase subunit C from Acidiphilium cryptum (strain JF-5).